The sequence spans 494 residues: Alpha-amylase A (494 aa).

Residues 1-18 (MFLAKSIVCLALLAVANA) form the signal peptide. Gln19 carries the post-translational modification Pyrrolidone carboxylic acid. A disulfide bridge connects residues Cys46 and Cys102. Ca(2+) contacts are provided by Asn116, Arg165, and Asp174. An intrachain disulfide couples Cys153 to Cys167. Arg202 is a binding site for chloride. The active-site Nucleophile is Asp204. Position 208 (His208) interacts with Ca(2+). The active-site Proton donor is the Glu241. 2 residues coordinate chloride: Asn304 and Arg343. 2 cysteine pairs are disulfide-bonded: Cys376-Cys382 and Cys448-Cys460.

The protein belongs to the glycosyl hydrolase 13 family. Monomer. Ca(2+) is required as a cofactor. Requires chloride as cofactor.

The enzyme catalyses Endohydrolysis of (1-&gt;4)-alpha-D-glucosidic linkages in polysaccharides containing three or more (1-&gt;4)-alpha-linked D-glucose units.. This chain is Alpha-amylase A (Amy-p), found in Drosophila melanogaster (Fruit fly).